The primary structure comprises 202 residues: FMN-dependent NADH:quinone oxidoreductase (202 aa).

FMN is bound by residues Ser-9, 15–17 (SVS), 95–98 (MYNF), and 139–142 (SRGG).

This sequence belongs to the azoreductase type 1 family. Homodimer. It depends on FMN as a cofactor.

It carries out the reaction 2 a quinone + NADH + H(+) = 2 a 1,4-benzosemiquinone + NAD(+). The catalysed reaction is N,N-dimethyl-1,4-phenylenediamine + anthranilate + 2 NAD(+) = 2-(4-dimethylaminophenyl)diazenylbenzoate + 2 NADH + 2 H(+). Quinone reductase that provides resistance to thiol-specific stress caused by electrophilic quinones. Its function is as follows. Also exhibits azoreductase activity. Catalyzes the reductive cleavage of the azo bond in aromatic azo compounds to the corresponding amines. The protein is FMN-dependent NADH:quinone oxidoreductase of Laribacter hongkongensis (strain HLHK9).